Consider the following 671-residue polypeptide: Alpha-1,4-glucan:maltose-1-phosphate maltosyltransferase (671 aa).

Lys252, Gln312, and Asp347 together coordinate alpha-maltose 1-phosphate. Asp382 (nucleophile) is an active-site residue. Residue Asn383 coordinates alpha-maltose 1-phosphate. Glu411 acts as the Proton donor in catalysis. 521-522 (KY) is an alpha-maltose 1-phosphate binding site.

This sequence belongs to the glycosyl hydrolase 13 family. GlgE subfamily. In terms of assembly, homodimer.

The catalysed reaction is alpha-maltose 1-phosphate + [(1-&gt;4)-alpha-D-glucosyl](n) = [(1-&gt;4)-alpha-D-glucosyl](n+2) + phosphate. Functionally, maltosyltransferase that uses maltose 1-phosphate (M1P) as the sugar donor to elongate linear or branched alpha-(1-&gt;4)-glucans. Is involved in a branched alpha-glucan biosynthetic pathway from trehalose, together with TreS, Mak and GlgB. This chain is Alpha-1,4-glucan:maltose-1-phosphate maltosyltransferase, found in Corynebacterium pseudotuberculosis (strain 1002).